Consider the following 1110-residue polypeptide: Retinal guanylyl cyclase 1 (1110 aa).

The first 56 residues, 1–56, serve as a signal peptide directing secretion; sequence MTACTFLAGGLRDPGLCGPTRWAPSPPGLPPIPPRPRLRLRPPLLLLLLLPRSVLS. Topologically, residues 57–467 are extracellular; the sequence is AVFTVGVLGP…PDTICNGGVE (411 aa). N-linked (GlcNAc...) asparagine glycosylation is present at N302. The chain crosses the membrane as a helical span at residues 468-492; sequence PSVVFIGFLLVVGMGLAGAFLAHYC. The Protein kinase domain occupies 493–813; sequence RHRLLHIQMV…DRTFELFKSI (321 aa). Over 493-1110 the chain is Cytoplasmic; that stretch reads RHRLLHIQMV…KARPGQFSGK (618 aa). The Guanylate cyclase domain maps to 885-1015; the sequence is TLYFSDIVGF…DTVNTASAME (131 aa). Residues 1070-1110 are disordered; the sequence is PIPKPPDLQPGASNHGISLHEIPPDRRQKLEKARPGQFSGK. Residues 1091–1103 show a composition bias toward basic and acidic residues; it reads IPPDRRQKLEKAR.

This sequence belongs to the adenylyl cyclase class-4/guanylyl cyclase family. As to quaternary structure, homodimer; requires homodimerization for guanylyl cyclase activity. Interacts (via C-terminus) with RD3 (via C-terminus); promotes the exit of GUCY2D from the endoplasmic reticulum and its trafficking to the photoreceptor outer segments. Interaction with RD3 negatively regulates GUCY2D guanylate cyclase activity. As to expression, expressed in the retina in rod outer segment.

Its subcellular location is the photoreceptor outer segment membrane. The protein resides in the endoplasmic reticulum membrane. It catalyses the reaction GTP = 3',5'-cyclic GMP + diphosphate. Activated by GUCA1A when free calcium ions concentration is low, and inhibited by GUCA1A when free calcium ions concentration is high. Negatively regulated by RD3; inhibits the basal and GUCA1A-stimulated guanylate cyclase activity. Functionally, catalyzes the synthesis of cyclic GMP (cGMP) in rods and cones of photoreceptors. Plays an essential role in phototransduction, by mediating cGMP replenishment. May also participate in the trafficking of membrane-asociated proteins to the photoreceptor outer segment membrane. This Bos taurus (Bovine) protein is Retinal guanylyl cyclase 1 (GUCY2D).